The chain runs to 857 residues: Trehalose transporter 1 (857 aa).

Disordered stretches follow at residues 1 to 28 (MSGRDNRGAGGGGGGHQPLSNAMGKLKE) and 62 to 202 (DPFL…QKAT). Residues 1–392 (MSGRDNRGAG…VYRPTTNPIY (392 aa)) are Cytoplasmic-facing. Residue A9 is modified to Phosphothreonine. G12 bears the Phosphoserine mark. The segment covering 69–81 (VSPQRHPQNTVRT) has biased composition (polar residues). Residues 134-143 (EIREHRDRQQ) are compositionally biased toward basic and acidic residues. A compositionally biased stretch (polar residues) spans 171–181 (GNSNTNSNKAA). Phosphoserine is present on residues S248, S249, and S250. Disordered regions lie at residues 249–269 (SSEEEFHKTRREFQGRKHQSL) and 280–299 (VLQGSSTDSDEEGEDAEHKR). Phosphoserine occurs at positions 320 and 322. Positions 327–346 (LTSRQHFQQQRSISTDSRKS) are disordered. Positions 330–341 (RQHFQQQRSIST) are enriched in polar residues. Residues 393-413 (IWTQVLAALSVSLGSLVVGFV) form a helical membrane-spanning segment. The Extracellular segment spans residues 414–440 (SAYTSPALVSMTDRNITSFEVTQDAGS). N428 carries an N-linked (GlcNAc...) asparagine glycan. The chain crosses the membrane as a helical span at residues 441–461 (WVGGIMPLAGLAGGIAGGPLI). Residues 462–473 (EYLGRRNTILAT) are Cytoplasmic-facing. A helical transmembrane segment spans residues 474–494 (AVPFIVSSLLIACAVNVAMVL). Topologically, residues 495 to 497 (CGR) are extracellular. The helical transmembrane segment at 498 to 518 (FLAGFCVGIASLSLPVYLGET) threads the bilayer. The Cytoplasmic segment spans residues 519 to 528 (VQPEVRGTLG). The chain crosses the membrane as a helical span at residues 529-549 (LLPTAFGNIGILLCFVAGSFM). An N-linked (GlcNAc...) asparagine glycan is attached at N550. The Extracellular segment spans residues 550–552 (NWS). A helical membrane pass occupies residues 553 to 573 (MLAFLGAALPVPFLILMFLIP). Topologically, residues 574-636 (ETPRWFVGRG…ELLKLNNLKP (63 aa)) are cytoplasmic. Residues 637 to 657 (LSISLGLMFFQQFSGINAVIF) traverse the membrane as a helical segment. Over 658-673 (YTVQIFKDAGSTIDGN) the chain is Extracellular. The chain crosses the membrane as a helical span at residues 674–694 (LCTIIVGIVNFLATFIGIVLI). The Cytoplasmic segment spans residues 695–700 (DRAGRK). The helical transmembrane segment at 701–721 (ILLYVSDIAMVLTLFVLGGFF) threads the bilayer. Topologically, residues 722-740 (YCKTYGPDVSHLGWLPLTC) are extracellular. The chain crosses the membrane as a helical span at residues 741 to 761 (FVIYILGFSLGFGPIPWLMMG). Residues 762–767 (EILPAK) are Cytoplasmic-facing. The helical transmembrane segment at 768–788 (IRGSAASVATAFNWFCTFVVT) threads the bilayer. Topologically, residues 789-801 (KTFQDLTVAMGAH) are extracellular. The helical transmembrane segment at 802–822 (GAFWLFGAICFVGLFFVIIYV) threads the bilayer. The Cytoplasmic portion of the chain corresponds to 823–857 (PETQGKTLEDIERKMMGRVRRMSSVANIKPLSFNM). 2 positions are modified to phosphoserine: S845 and S846.

This sequence belongs to the major facilitator superfamily. Sugar transporter (TC 2.A.1.1) family. Trehalose transporter subfamily. Expressed in perineurial glia of the outer layer of the nervous system that forms the blood brain barrier (at protein level). Expressed in the fat body (at protein level). As to expression, may be specifically expressed in perineurial glia (at protein level). In terms of tissue distribution, may be specifically expressed in the fat body (at protein level).

Its subcellular location is the cell membrane. The protein localises to the vesicle. It catalyses the reaction alpha,alpha-trehalose(in) = alpha,alpha-trehalose(out). The enzyme catalyses D-glucose(out) = D-glucose(in). Functionally, low-capacity facilitative transporter for trehalose. Can also transport glucose. Does not transport maltose, sucrose, lactose or fructose. Mediates the bidirectional transfer of trehalose. Responsible for the transport of trehalose synthesized in the fat body and the incorporation of trehalose into other tissues that require a carbon source, thereby regulating trehalose levels in the hemolymph. Required in glial cells of the blood brain barrier to fuel glycolysis but not required in neurons. Neurons rely on the citric acid cycle for their energy needs and utilise alanine and lactate, by-products of glial cell glycolysis released into the hemolymph, as fuel. Increased expression in glial cells of the blood brain barrier during starvation and increased cell surface localization enhances carbohydrate uptake to protect the central nervous system from restricted nutrient availability. The polypeptide is Trehalose transporter 1 (Drosophila melanogaster (Fruit fly)).